We begin with the raw amino-acid sequence, 164 residues long: Ribosome maturation factor RimP (164 aa).

This sequence belongs to the RimP family.

The protein resides in the cytoplasm. Its function is as follows. Required for maturation of 30S ribosomal subunits. The protein is Ribosome maturation factor RimP of Thermodesulfovibrio yellowstonii (strain ATCC 51303 / DSM 11347 / YP87).